The primary structure comprises 317 residues: Transaldolase 1 (317 aa).

The Schiff-base intermediate with substrate role is filled by Lys132.

This sequence belongs to the transaldolase family. Type 1 subfamily. In terms of assembly, homodimer.

It localises to the cytoplasm. The catalysed reaction is D-sedoheptulose 7-phosphate + D-glyceraldehyde 3-phosphate = D-erythrose 4-phosphate + beta-D-fructose 6-phosphate. The protein operates within carbohydrate degradation; pentose phosphate pathway; D-glyceraldehyde 3-phosphate and beta-D-fructose 6-phosphate from D-ribose 5-phosphate and D-xylulose 5-phosphate (non-oxidative stage): step 2/3. In terms of biological role, transaldolase is important for the balance of metabolites in the pentose-phosphate pathway. This chain is Transaldolase 1, found in Shigella sonnei (strain Ss046).